The following is a 79-amino-acid chain: Small ribosomal subunit protein uS17 (79 aa).

This sequence belongs to the universal ribosomal protein uS17 family. As to quaternary structure, part of the 30S ribosomal subunit.

Functionally, one of the primary rRNA binding proteins, it binds specifically to the 5'-end of 16S ribosomal RNA. This chain is Small ribosomal subunit protein uS17, found in Orientia tsutsugamushi (strain Boryong) (Rickettsia tsutsugamushi).